A 192-amino-acid chain; its full sequence is Phosphoheptose isomerase (192 aa).

The SIS domain maps to 37–192; that stretch reads LADSFKGGGK…IQLIEKEMVK (156 aa). Substrate is bound at residue 52 to 54; sequence NGG. Residues histidine 61 and glutamate 65 each contribute to the Zn(2+) site. Substrate-binding positions include glutamate 65, 93–94, 119–121, serine 124, and glutamine 172; these read ND and STS. Residues glutamine 172 and histidine 180 each coordinate Zn(2+).

This sequence belongs to the SIS family. GmhA subfamily. As to quaternary structure, homotetramer. Requires Zn(2+) as cofactor.

It is found in the cytoplasm. It catalyses the reaction 2 D-sedoheptulose 7-phosphate = D-glycero-alpha-D-manno-heptose 7-phosphate + D-glycero-beta-D-manno-heptose 7-phosphate. It functions in the pathway carbohydrate biosynthesis; D-glycero-D-manno-heptose 7-phosphate biosynthesis; D-glycero-alpha-D-manno-heptose 7-phosphate and D-glycero-beta-D-manno-heptose 7-phosphate from sedoheptulose 7-phosphate: step 1/1. Functionally, catalyzes the isomerization of sedoheptulose 7-phosphate in D-glycero-D-manno-heptose 7-phosphate. This Escherichia coli O7:K1 (strain IAI39 / ExPEC) protein is Phosphoheptose isomerase.